A 367-amino-acid polypeptide reads, in one-letter code: Lysophosphatidic acid receptor 5 (367 aa).

Over 1 to 25 the chain is Extracellular; the sequence is MQANSSAKSLPTECPDYQPIHHLHL. Asn-4 carries an N-linked (GlcNAc...) asparagine glycan. A helical membrane pass occupies residues 26–46; sequence VVYSVVLAAGLPLNALALWVF. The Cytoplasmic segment spans residues 47–54; that stretch reads LRALRVHS. The chain crosses the membrane as a helical span at residues 55 to 75; that stretch reads VVSVYMCNLAASDLLFTLSLP. Topologically, residues 76 to 95 are extracellular; that stretch reads LRLSYYARHYWPFPDFLCQL. Cys-93 and Cys-174 are disulfide-bonded. A helical membrane pass occupies residues 96–116; the sequence is AGAVFQMNMYGSCIFLTLINV. Residues 117 to 135 are Cytoplasmic-facing; the sequence is DRYAAIVHPLRLRHLRRPR. The helical transmembrane segment at 136–156 threads the bilayer; it reads VARLLCLGVWALILVFAVPTI. Over 157–186 the chain is Extracellular; the sequence is LAHQPSSCARDGRNVSLCFESFSDKLWKGS. N-linked (GlcNAc...) asparagine glycosylation is present at Asn-170. A helical membrane pass occupies residues 187 to 207; sequence LLPLLLLAEALGFLLPLAAVV. At 208 to 238 the chain is on the cytoplasmic side; the sequence is YSSGRVFWTLARPDATRSQRRRKTVRLLLAS. Residues 239-259 traverse the membrane as a helical segment; that stretch reads LVIFLLCFVPYNATLAVYGLL. The Extracellular segment spans residues 260–275; it reads RGEVVPASSEARKKVR. Residues 276 to 296 traverse the membrane as a helical segment; sequence GVLMVMVLLAGANCVLDPLVY. Residues 297–367 are Cytoplasmic-facing; the sequence is YFSAEGFRNT…FTPSHEDSSF (71 aa). Positions 332–350 are enriched in low complexity; the sequence is LTETAHASTLTTTSQGQLQ. The disordered stretch occupies residues 332–367; it reads LTETAHASTLTTTSQGQLQPSDPRSSFTPSHEDSSF. The segment covering 351 to 360 has biased composition (polar residues); the sequence is PSDPRSSFTP.

It belongs to the G-protein coupled receptor 1 family.

It localises to the cell membrane. In terms of biological role, receptor for lysophosphatidic acid (LPA), a mediator of diverse cellular activities. This Bos taurus (Bovine) protein is Lysophosphatidic acid receptor 5 (LPAR5).